The following is a 190-amino-acid chain: UPF0232 protein SCO3875 (190 aa).

Disordered stretches follow at residues 1–70 (MSAD…GRDP) and 163–190 (GPGG…DTYG). Low complexity predominate over residues 26-35 (GVDLARVALR). Residues 36 to 45 (AAREAARARG) are compositionally biased toward basic and acidic residues. Over residues 163-172 (GPGGPGGPGR) the composition is skewed to gly residues.

It belongs to the UPF0232 family.

This chain is UPF0232 protein SCO3875, found in Streptomyces coelicolor (strain ATCC BAA-471 / A3(2) / M145).